The following is a 993-amino-acid chain: Nisin biosynthesis protein NisB (993 aa).

Residues 838 to 851 (AIFCADSKIIPNLL) traverse the membrane as a helical segment.

This sequence to B.subtilis SpaB and S.epidermidis EpiB.

It is found in the cell membrane. Its function is as follows. Involved in the post-translational modification of the lantibiotic nisin. This chain is Nisin biosynthesis protein NisB (nisB), found in Lactococcus lactis subsp. lactis (Streptococcus lactis).